Reading from the N-terminus, the 289-residue chain is MELIIISGRSGAGKSVALRALEDMGYYCVDNLPINLLPELADILSTSQQSAAVSLDIRNLPHSPETLDTLLQQLADAQHQVRIIFLEADRSTLIRRYSDSRRLHPLSMQDLSLEAAIEAEAGYLEPLLQNAELVINTSEISTHELAQRLREFLKGKPDKELKIVVESFGFKYGLPLDADYVFDVRFLPNPHWNPDLRPMTGLDQPVIDFLGKYSEVNNFIYSTRNYLETWLPMLEQNNRSYLTIAIGCTGGKHRSVYIAQQLGEYFQAKGKKVKIQHKSLEKHHKKNSA.

8 to 15 (GRSGAGKS) is an ATP binding site. A GTP-binding site is contributed by 56 to 59 (DIRN).

Belongs to the RapZ-like family.

Its function is as follows. Displays ATPase and GTPase activities. The polypeptide is Nucleotide-binding protein MS1718 (Mannheimia succiniciproducens (strain KCTC 0769BP / MBEL55E)).